The primary structure comprises 98 residues: Integration host factor subunit alpha (98 aa).

The interval 50-71 (GNFDLRDKNQRPGRNPKTGEDI) is disordered.

The protein belongs to the bacterial histone-like protein family. In terms of assembly, heterodimer of an alpha and a beta chain.

This protein is one of the two subunits of integration host factor, a specific DNA-binding protein that functions in genetic recombination as well as in transcriptional and translational control. This Proteus mirabilis (strain HI4320) protein is Integration host factor subunit alpha.